The primary structure comprises 487 residues: Cyclic AMP-dependent transcription factor ATF-2 (487 aa).

The segment at 7–31 (FLCTAPGCGQRFTNEDHLAVHKHKH) adopts a C2H2-type zinc-finger fold. Disordered stretches follow at residues 106–132 (EEPS…DEKE) and 267–354 (QHPQ…CRQK). The span at 298 to 319 (QQPATSTTETPASPAQPTQQTP) shows a compositional bias: low complexity. Residues 328–345 (AANEDPDEKRRKFLERNR) are compositionally biased toward basic and acidic residues. The 64-residue stretch at 334-397 (DEKRRKFLER…AQLKQLLLAH (64 aa)) folds into the bZIP domain. The segment at 336–356 (KRRKFLERNRAAASRCRQKRK) is basic motif. The tract at residues 362–390 (LEKKAEDLSSLNGQLQNEVTLLRNEVAQL) is leucine-zipper. Residues 387 to 396 (VAQLKQLLLA) carry the Nuclear export signal motif. The segment at 407–487 (KKSGYHTADK…PPSQAQPSGS (81 aa)) is disordered. Polar residues predominate over residues 425-436 (VPSSPHTEAIQH). Low complexity predominate over residues 437-449 (SSVSTSNGVSSTS). Residues 457–468 (SVLTQLADQSSE) show a composition bias toward polar residues.

It belongs to the bZIP family. ATF subfamily. Binds DNA as a dimer and can form a homodimer in the absence of DNA. Can form a heterodimer with JUN. Heterodimerization is essential for its transcriptional activity.

Its subcellular location is the nucleus. It is found in the cytoplasm. The protein localises to the mitochondrion outer membrane. Transcriptional activator which regulates the transcription of various genes, including those involved in anti-apoptosis, cell growth, and DNA damage response. Dependent on its binding partner, binds to CRE (cAMP response element) consensus sequences (5'-TGACGTCA-3') or to AP-1 (activator protein 1) consensus sequences (5'-TGACTCA-3'). The protein is Cyclic AMP-dependent transcription factor ATF-2 (ATF2) of Gallus gallus (Chicken).